The primary structure comprises 374 residues: Type II methyltransferase M.NgoFVII (374 aa).

The SAM-dependent MTase C5-type domain maps to 16-344 (PKILSLFSGC…KSILPIFSDN (329 aa)). The active site involves cysteine 88.

Belongs to the class I-like SAM-binding methyltransferase superfamily. C5-methyltransferase family.

It carries out the reaction a 2'-deoxycytidine in DNA + S-adenosyl-L-methionine = a 5-methyl-2'-deoxycytidine in DNA + S-adenosyl-L-homocysteine + H(+). In terms of biological role, a methylase, recognizes the double-stranded sequence 5'-GCSGC-3', methylates C-5 on both strands, and protects the DNA from cleavage by the NgoFVII endonuclease. The polypeptide is Type II methyltransferase M.NgoFVII (ngoFVIIM) (Neisseria gonorrhoeae).